Consider the following 150-residue polypeptide: MSEQQELQPAFSIEKIYVKDISLEVPNAPQVFLEQAQPEIDMQLASAGQQLDDGFFEVTLTVTVTAKLPEKTMFLCEVAQAGIFQIRNIPGEDLDPILGVACPNILFPYARETVSSVVNRAGFPPVLLAPINFEALYMQQRAQQAEAGNA.

It belongs to the SecB family. As to quaternary structure, homotetramer, a dimer of dimers. One homotetramer interacts with 1 SecA dimer.

It is found in the cytoplasm. In terms of biological role, one of the proteins required for the normal export of preproteins out of the cell cytoplasm. It is a molecular chaperone that binds to a subset of precursor proteins, maintaining them in a translocation-competent state. It also specifically binds to its receptor SecA. This is Protein-export protein SecB from Chromobacterium violaceum (strain ATCC 12472 / DSM 30191 / JCM 1249 / CCUG 213 / NBRC 12614 / NCIMB 9131 / NCTC 9757 / MK).